The sequence spans 385 residues: Putative F-box protein At1g49610 (385 aa).

The F-box domain maps to 25 to 73 (VDSISSLPDVILQENLSLIPTKFAIRTSVLSKRWRHVWSETPSLDFDDC).

This Arabidopsis thaliana (Mouse-ear cress) protein is Putative F-box protein At1g49610.